The chain runs to 798 residues: Phenylalanine--tRNA ligase beta subunit (798 aa).

The 110-residue stretch at 39 to 148 (GKDLDNVVIG…EDAPIGTEYR (110 aa)) folds into the tRNA-binding domain. A B5 domain is found at 401–477 (PQRAEISLNL…RMYGFDNIEA (77 aa)). Mg(2+)-binding residues include aspartate 455, aspartate 461, glutamate 464, and glutamate 465. Residues 705 to 797 (SKYPEVLRDL…IKDKYNGEIR (93 aa)) enclose the FDX-ACB domain.

Belongs to the phenylalanyl-tRNA synthetase beta subunit family. Type 1 subfamily. As to quaternary structure, tetramer of two alpha and two beta subunits. The cofactor is Mg(2+).

Its subcellular location is the cytoplasm. It carries out the reaction tRNA(Phe) + L-phenylalanine + ATP = L-phenylalanyl-tRNA(Phe) + AMP + diphosphate + H(+). This is Phenylalanine--tRNA ligase beta subunit from Fusobacterium nucleatum subsp. nucleatum (strain ATCC 25586 / DSM 15643 / BCRC 10681 / CIP 101130 / JCM 8532 / KCTC 2640 / LMG 13131 / VPI 4355).